Consider the following 249-residue polypeptide: General transcription factor IIF subunit 2 (249 aa).

The residue at position 2 (Ala2) is an N-acetylalanine. Residues Lys22, Lys33, and Lys137 each carry the N6-acetyllysine modification. Residue Ser142 is modified to Phosphoserine. Gly227 and His229 together coordinate DNA. A Phosphoserine modification is found at Ser248.

Belongs to the TFIIF beta subunit family. In terms of assembly, heterodimer of an alpha and a beta subunit. Interacts with HTATSF1 and GPBP1. Interacts with URI1. Interacts with GTF2B (via N-terminus); this interaction is inhibited in presence of GTF2F1. Part of TBP-based Pol II pre-initiation complex (PIC), in which Pol II core assembles with general transcription factors and other specific initiation factors including GTF2E1, GTF2E2, GTF2F1, GTF2F2, TCEA1, ERCC2, ERCC3, GTF2H2, GTF2H3, GTF2H4, GTF2H5, GTF2A1, GTF2A2, GTF2B and TBP; this large multi-subunit PIC complex mediates DNA unwinding and targets Pol II core to the transcription start site where the first phosphodiester bond forms.

The protein localises to the nucleus. Its function is as follows. TFIIF is a general transcription initiation factor that binds to RNA polymerase II and helps to recruit it to the initiation complex in collaboration with TFIIB. It promotes transcription elongation. The polypeptide is General transcription factor IIF subunit 2 (Gtf2f2) (Rattus norvegicus (Rat)).